Here is a 219-residue protein sequence, read N- to C-terminus: MYQHHNWQGALLDYPVSKVVCVGSNYAKHIKEMGSAVPEEPVLFIKPETALCDLRQPLAIPSDFGSVHHEVELAVLIGATLRQATEEHVRKAIAGYGVALDLTLRDVQGKMKKAGQPWEKAKAFDNSCPLSGFIPAAEFTGDPQNTTLSLSVNGEQRQQGTTADMIHKIVPLIAYMSKFFTLKAGDVVLTGTPDGVGPLQSGDELTVTFDGHSLTTRVL.

3 residues coordinate Mg(2+): Glu-70, Glu-72, and Asp-101.

This sequence belongs to the FAH family. The cofactor is a divalent metal cation.

The enzyme catalyses oxaloacetate = enol-oxaloacetate. Functionally, tautomerase that converts enol-oxaloacetate to the keto form of oxaloacetate. The protein is Oxaloacetate tautomerase YcgM of Escherichia coli (strain K12).